Reading from the N-terminus, the 357-residue chain is Probable dual-specificity RNA methyltransferase RlmN (357 aa).

Glu-92 functions as the Proton acceptor in the catalytic mechanism. In terms of domain architecture, Radical SAM core spans 98–336; it reads HKYGLSVCVT…CGVRLEHGTD (239 aa). Cys-105 and Cys-341 form a disulfide bridge. [4Fe-4S] cluster-binding residues include Cys-112, Cys-116, and Cys-119. S-adenosyl-L-methionine contacts are provided by residues 164–165, Ser-196, 219–221, and Asn-297; these read GE and SLH. The active-site S-methylcysteine intermediate is the Cys-341.

Belongs to the radical SAM superfamily. RlmN family. Requires [4Fe-4S] cluster as cofactor.

The protein resides in the cytoplasm. The enzyme catalyses adenosine(2503) in 23S rRNA + 2 reduced [2Fe-2S]-[ferredoxin] + 2 S-adenosyl-L-methionine = 2-methyladenosine(2503) in 23S rRNA + 5'-deoxyadenosine + L-methionine + 2 oxidized [2Fe-2S]-[ferredoxin] + S-adenosyl-L-homocysteine. The catalysed reaction is adenosine(37) in tRNA + 2 reduced [2Fe-2S]-[ferredoxin] + 2 S-adenosyl-L-methionine = 2-methyladenosine(37) in tRNA + 5'-deoxyadenosine + L-methionine + 2 oxidized [2Fe-2S]-[ferredoxin] + S-adenosyl-L-homocysteine. Its function is as follows. Specifically methylates position 2 of adenine 2503 in 23S rRNA and position 2 of adenine 37 in tRNAs. The polypeptide is Probable dual-specificity RNA methyltransferase RlmN (Exiguobacterium sibiricum (strain DSM 17290 / CCUG 55495 / CIP 109462 / JCM 13490 / 255-15)).